The following is a 432-amino-acid chain: ATP-dependent RNA helicase RhlB (432 aa).

The Q motif motif lies at 9-37 (QNFADLGLQPQVIDGLNAKGFIKCTPIQA). The Helicase ATP-binding domain maps to 40 to 219 (LPVLLAGQDI…FEHMQEPEHV (180 aa)). Residue 53–60 (AQTGTGKT) coordinates ATP. The DEAD box motif lies at 165 to 168 (DEAD). The region spanning 245-390 (ALLQTLIEEE…QSDYDASALL (146 aa)) is the Helicase C-terminal domain. The interval 396–432 (PLRLQRRPQQNRRNNNGQRQGGNRKHTRPRQPRNTQS) is disordered. Residues 417–426 (GNRKHTRPRQ) are compositionally biased toward basic residues.

This sequence belongs to the DEAD box helicase family. RhlB subfamily. In terms of assembly, component of the RNA degradosome, which is a multiprotein complex involved in RNA processing and mRNA degradation.

The protein resides in the cytoplasm. The catalysed reaction is ATP + H2O = ADP + phosphate + H(+). DEAD-box RNA helicase involved in RNA degradation. Has RNA-dependent ATPase activity and unwinds double-stranded RNA. The chain is ATP-dependent RNA helicase RhlB from Aliivibrio fischeri (strain ATCC 700601 / ES114) (Vibrio fischeri).